Here is a 186-residue protein sequence, read N- to C-terminus: uncharacterized protein (186 aa).

The N-linked (GlcNAc...) asparagine; by host glycan is linked to N34. The next 3 membrane-spanning stretches (helical) occupy residues I47–F67, I114–L134, and L144–F164.

Its subcellular location is the membrane. This is an uncharacterized protein from Acanthamoeba polyphaga mimivirus (APMV).